A 469-amino-acid polypeptide reads, in one-letter code: MNSILKEIINDKLMWVKYHKKKQPLFTFQNKIVRSNYNFKNSLKSIHPSYILEIKKASPSLGIINNKLDLKKISLIYKKYASSISILTDEKYFHGNFEFIPIVRKIAHRQPILCKDFFIDPYQIYLARYYQADAILLMLSILNDNQYVFLRNIAEMLNMDVLTEIENKKELTRAINLKSKIIGINNRNLNNLSIDIQKTKVLAPLIPKKIIIISESGIQNYNQIRQLKPFVQGFLIGSNLMRKKNLEEAVCKMILGNNKICGLTQSSDVKIIKEYGIVYGGLIFCKFSPRYINCNNAYSIINNVSLKYIGVFCNENLKRVAYIGTKLSLHAVQLHGNEDQIYINNLKLILPKHIKIWKSIIYLDFLKNQKHLFYNVNKYIIDNKDGGSGKTFNWKYLKNCKLDNVILAGGLDINNCILATDLGCYGYDFNSKLESSPGIKDLKKIVALTYSLRRHTVFNYRNLICLGKK.

The indole-3-glycerol phosphate synthase stretch occupies residues 1–257 (MNSILKEIIN…EAVCKMILGN (257 aa)). Residues 258–469 (NKICGLTQSS…YRNLICLGKK (212 aa)) form an N-(5'-phosphoribosyl)anthranilate isomerase region.

The protein in the N-terminal section; belongs to the TrpC family. It in the C-terminal section; belongs to the TrpF family. Monomer.

It carries out the reaction N-(5-phospho-beta-D-ribosyl)anthranilate = 1-(2-carboxyphenylamino)-1-deoxy-D-ribulose 5-phosphate. The catalysed reaction is 1-(2-carboxyphenylamino)-1-deoxy-D-ribulose 5-phosphate + H(+) = (1S,2R)-1-C-(indol-3-yl)glycerol 3-phosphate + CO2 + H2O. It functions in the pathway amino-acid biosynthesis; L-tryptophan biosynthesis; L-tryptophan from chorismate: step 3/5. It participates in amino-acid biosynthesis; L-tryptophan biosynthesis; L-tryptophan from chorismate: step 4/5. In terms of biological role, bifunctional enzyme that catalyzes two sequential steps of tryptophan biosynthetic pathway. The first reaction is catalyzed by the isomerase, coded by the TrpF domain; the second reaction is catalyzed by the synthase, coded by the TrpC domain. This Buchnera aphidicola subsp. Baizongia pistaciae (strain Bp) protein is Tryptophan biosynthesis protein TrpCF (trpC).